The chain runs to 254 residues: Type III pantothenate kinase (254 aa).

6–13 serves as a coordination point for ATP; the sequence is DVGNTNTV. Substrate-binding positions include Tyr-100 and 107–110; that span reads GADR. Catalysis depends on Asp-109, which acts as the Proton acceptor. A K(+)-binding site is contributed by Asp-129. Thr-132 contributes to the ATP binding site. A substrate-binding site is contributed by Thr-184.

The protein belongs to the type III pantothenate kinase family. Homodimer. NH4(+) is required as a cofactor. It depends on K(+) as a cofactor.

The protein resides in the cytoplasm. The catalysed reaction is (R)-pantothenate + ATP = (R)-4'-phosphopantothenate + ADP + H(+). It functions in the pathway cofactor biosynthesis; coenzyme A biosynthesis; CoA from (R)-pantothenate: step 1/5. In terms of biological role, catalyzes the phosphorylation of pantothenate (Pan), the first step in CoA biosynthesis. The chain is Type III pantothenate kinase from Halalkalibacterium halodurans (strain ATCC BAA-125 / DSM 18197 / FERM 7344 / JCM 9153 / C-125) (Bacillus halodurans).